Reading from the N-terminus, the 863-residue chain is Paramyosin (863 aa).

A nonhelical region region spans residues 1–26 (MSESHVKISRTIIRGTSPSTVRLESP). A coiled-coil region spans residues 27–836 (VRELEDLLDL…ERTITIKRTI (810 aa)). Residues 837–863 (GGPGSRAVSVVREINSVSRGNRATSIM) form a nonhelical region region.

It belongs to the paramyosin family. Homodimer.

The protein localises to the cytoplasm. It is found in the myofibril. Functionally, paramyosin is a major structural component of many thick filaments isolated from invertebrate muscles. This is Paramyosin from Echinococcus granulosus (Hydatid tapeworm).